We begin with the raw amino-acid sequence, 116 residues long: Spexin (116 aa).

The N-terminal stretch at 1–26 (MKGLRSLAATTLALFLVFVFLGNSSC) is a signal peptide. A propeptide spanning residues 27-35 (APQRLLERR) is cleaved from the precursor. Residue glutamine 49 is modified to Glutamine amide. 2 propeptides span residues 50–116 (GRRF…LLNW) and 74–116 (PNPQ…LLNW). The span at 55 to 73 (SDQSRRKDLSDRPLPERRS) shows a compositional bias: basic and acidic residues. The disordered stretch occupies residues 55–77 (SDQSRRKDLSDRPLPERRSPNPQ).

The protein belongs to the spexin family. As to expression, expressed in the type I glomic cells within the carotid body (at protein level). Expressed predominantly in pancreas, testis, kidney, brain and placenta. Expressed in submucosal layer of esophagus and stomach fundus.

The protein resides in the secreted. Its subcellular location is the extracellular space. The protein localises to the cytoplasmic vesicle. It is found in the secretory vesicle. Its function is as follows. Plays a role as a central modulator of cardiovascular and renal function and nociception. Also plays a role in energy metabolism and storage. Inhibits adrenocortical cell proliferation with minor stimulation on corticosteroid release. Acts as a ligand for galanin receptors GALR2 and GALR3. Intracerebroventricular administration of the peptide induces an increase in arterial blood pressure, a decrease in both heart rate and renal excretion and delayed natriuresis. Intraventricular administration of the peptide induces antinociceptive activity. Also induces contraction of muscarinic-like stomach smooth muscles. Intraperitoneal administration of the peptide induces a reduction in food consumption and body weight. Inhibits long chain fatty acid uptake into adipocytes. Functionally, intracerebroventricular administration of the peptide induces a decrease in heart rate, but no change in arterial pressure, and an increase in urine flow rate. Intraventricular administration of the peptide induces antinociceptive activity. This is Spexin (SPX) from Homo sapiens (Human).